Here is a 160-residue protein sequence, read N- to C-terminus: 17.9 kDa class II heat shock protein (160 aa).

The sHSP domain maps to 44-160 (DARAMAATPA…KPKTIQVQVA (117 aa)).

The protein belongs to the small heat shock protein (HSP20) family.

The protein resides in the cytoplasm. The polypeptide is 17.9 kDa class II heat shock protein (HSP17.9) (Helianthus annuus (Common sunflower)).